The chain runs to 418 residues: Glutamyl-tRNA reductase (418 aa).

Substrate is bound by residues 49 to 52 (TCNR), S106, 111 to 113 (EPQ), and Q117. The Nucleophile role is filled by C50. 186–191 (GAGEMI) contributes to the NADP(+) binding site.

It belongs to the glutamyl-tRNA reductase family. In terms of assembly, homodimer.

The catalysed reaction is (S)-4-amino-5-oxopentanoate + tRNA(Glu) + NADP(+) = L-glutamyl-tRNA(Glu) + NADPH + H(+). It participates in porphyrin-containing compound metabolism; protoporphyrin-IX biosynthesis; 5-aminolevulinate from L-glutamyl-tRNA(Glu): step 1/2. Functionally, catalyzes the NADPH-dependent reduction of glutamyl-tRNA(Glu) to glutamate 1-semialdehyde (GSA). This chain is Glutamyl-tRNA reductase, found in Alcanivorax borkumensis (strain ATCC 700651 / DSM 11573 / NCIMB 13689 / SK2).